Reading from the N-terminus, the 193-residue chain is Transmembrane protein 276 (193 aa).

The signal sequence occupies residues 1–32; that stretch reads MTPRPGGEWSSALSHLALGAVSLHAALSTAQA. The next 4 helical transmembrane spans lie at 35-55, 63-83, 89-109, and 114-134; these read GAAA…ASGL, AGAW…FHWV, SANL…HLGA, and VAGQ…AVFT.

The protein resides in the membrane. This chain is Transmembrane protein 276, found in Bos taurus (Bovine).